The following is a 1133-amino-acid chain: RNA-dependent RNA polymerase 2 (1133 aa).

Mg(2+) contacts are provided by D830, D832, and D834.

It belongs to the RdRP family. In terms of assembly, interacts with NRPD1 and SHH1. Associates with Pol IV complex, forming an interpolymerase channel bridging their active sites, through which the Pol IV-generated transcript is handed over to the RDR2 active site after being backtracked, where it is used as the template for double-stranded RNA (dsRNA) synthesis. Interacts with JMJ24.

The protein resides in the nucleus. It localises to the nucleoplasm. Its subcellular location is the nucleolus. The catalysed reaction is RNA(n) + a ribonucleoside 5'-triphosphate = RNA(n+1) + diphosphate. Its function is as follows. RNA-dependent direct polymerase involved in the production of small interfering RNAs (siRNAs). Binds to single-stranded RNA (ssRNA); engages ssRNAs longer than 7 nucleotides and initiates internal to their 3' ends. Able to transcribe the RNA of an RNA/DNA hybrid, the transcript produced by Pol IV, if its 3' end is accessible, to generate double-stranded small interfering RNAs (dsRNAs) precursor essential for establishing and maintaining DNA methylation. Required for the biogenesis of endogenous siRNAs of 24 nucleotide which derive from heterochromatin and DNA repeats such as transposons or endogenous gene tandem repeats, such as repeats present in FWA gene. Involved in transcriptional gene silencing (TGS). Component of the RNA-directed DNA methylation (RdDM) silencing pathway that utilizes siRNAs to guide DNA methyltransferases to asymmetric cytosines. Involved in control of flowering time through RdDM of FWA locus. Required for reception of long-distance mRNA silencing in the shoot. Required for the formation of telomeric siRNAs and the RNA-dependent DNA methylation of asymmetric cytosines in telomeric (5'-CCCTAAA-3') repeats. The protein is RNA-dependent RNA polymerase 2 of Arabidopsis thaliana (Mouse-ear cress).